A 195-amino-acid chain; its full sequence is MALLTIGDQFPEYDLTAVVGGDLSKVDAKQPDDYFTRVTSKDYEGKWRIIFFWPKDFTFVCPTEIAAFGKLNEDFEDRDAKVLGVSVDNEFVHFQWRAQHEDLKTLPFPMVSDLKRELTAACGVLNADGVADRATFIVDPNNEVQFVSVTAGSVGRNVDEVLRVLDALQSDELCACNWKKGDPTINAGELLAGAV.

Positions 4–170 constitute a Thioredoxin domain; it reads LTIGDQFPEY…VLRVLDALQS (167 aa). Lys41 participates in a covalent cross-link: Isoglutamyl lysine isopeptide (Lys-Gln) (interchain with Q-Cter in protein Pup). The active-site Cysteine sulfenic acid (-SOH) intermediate is Cys61.

The protein belongs to the peroxiredoxin family. AhpC/Prx1 subfamily. As to quaternary structure, homodimer; disulfide-linked, upon oxidation. 6 homodimers assemble to form a ring-like dodecamer. Identified in a complex with AhpD, DlaT and Lpd.

It localises to the cytoplasm. It carries out the reaction N(6)-[(R)-dihydrolipoyl]-L-lysyl-[lipoyl-carrier protein] + a hydroperoxide = N(6)-[(R)-lipoyl]-L-lysyl-[lipoyl-carrier protein] + an alcohol + H2O. Its function is as follows. Thiol-specific peroxidase that catalyzes the reduction of hydrogen peroxide and organic hydroperoxides to water and alcohols, respectively. Plays a role in cell protection against oxidative stress by detoxifying peroxides. Together with AhpD, DlaT and Lpd, constitutes an NADH-dependent peroxidase active against hydrogen and alkyl peroxides as well as serving as a peroxynitrite reductase, thus protecting the bacterium against reactive nitrogen intermediates and oxidative stress generated by the host immune system. Does not however seem to play a role in detoxification of isoniazid. The sequence is that of Alkyl hydroperoxide reductase C from Mycolicibacterium smegmatis (strain ATCC 700084 / mc(2)155) (Mycobacterium smegmatis).